We begin with the raw amino-acid sequence, 428 residues long: Glutamate-1-semialdehyde 2,1-aminomutase 2 (428 aa).

N6-(pyridoxal phosphate)lysine is present on lysine 267.

This sequence belongs to the class-III pyridoxal-phosphate-dependent aminotransferase family. HemL subfamily. Homodimer. Pyridoxal 5'-phosphate is required as a cofactor.

It is found in the cytoplasm. It catalyses the reaction (S)-4-amino-5-oxopentanoate = 5-aminolevulinate. It functions in the pathway porphyrin-containing compound metabolism; protoporphyrin-IX biosynthesis; 5-aminolevulinate from L-glutamyl-tRNA(Glu): step 2/2. The polypeptide is Glutamate-1-semialdehyde 2,1-aminomutase 2 (Oceanobacillus iheyensis (strain DSM 14371 / CIP 107618 / JCM 11309 / KCTC 3954 / HTE831)).